A 298-amino-acid polypeptide reads, in one-letter code: Phospholipase A1 (298 aa).

Residues Cys-4 and Cys-87 are joined by a disulfide bond. N-linked (GlcNAc...) asparagine glycans are attached at residues Asn-88 and Asn-122. Catalysis depends on Ser-134, which acts as the Nucleophile. Asp-162 (charge relay system) is an active-site residue. 2 disulfides stabilise this stretch: Cys-173–Cys-178 and Cys-216–Cys-225. His-227 serves as the catalytic Charge relay system. 3 cysteine pairs are disulfide-bonded: Cys-242–Cys-266, Cys-243–Cys-291, and Cys-259–Cys-264.

The protein belongs to the AB hydrolase superfamily. Lipase family. As to expression, expressed by the venom gland.

It localises to the secreted. It catalyses the reaction a 1,2-diacyl-sn-glycero-3-phosphocholine + H2O = a 2-acyl-sn-glycero-3-phosphocholine + a fatty acid + H(+). In terms of biological role, catalyzes the hydrolysis of phosphatidylcholine with phospholipase A1 activity. May act as an allergen and induce hemolytic activity. The protein is Phospholipase A1 of Vespula squamosa (Southern yellow jacket).